A 419-amino-acid chain; its full sequence is 2-amino-3-ketobutyrate coenzyme A ligase, mitochondrial (419 aa).

The transit peptide at 1-21 directs the protein to the mitochondrion; sequence MWPGNAWRAALFWVPRGRRAQ. K45 is subject to N6-acetyllysine; alternate. At K45 the chain carries N6-succinyllysine; alternate. Position 134 to 135 (134 to 135) interacts with pyridoxal 5'-phosphate; sequence CY. A substrate-binding site is contributed by H159. K187 is subject to N6-acetyllysine; alternate. An N6-succinyllysine; alternate modification is found at K187. Residues S206, 262 to 265, and 295 to 296 contribute to the pyridoxal 5'-phosphate site; these read TLGK and SN. The residue at position 265 (K265) is an N6-(pyridoxal phosphate)lysine. N6-succinyllysine is present on residues K326 and K368. Position 383 is an N6-acetyllysine; alternate (K383). K383 is modified (N6-succinyllysine; alternate). R389 contacts substrate.

This sequence belongs to the class-II pyridoxal-phosphate-dependent aminotransferase family. Pyridoxal 5'-phosphate is required as a cofactor. In terms of tissue distribution, strongly expressed in heart, brain, liver and pancreas. Also found in lung.

The protein resides in the mitochondrion. The protein localises to the nucleus. It carries out the reaction glycine + acetyl-CoA = (2S)-2-amino-3-oxobutanoate + CoA. In terms of biological role, pyridoxal phosphate (PLP) dependent enzyme, which catalyzes the cleavage of 2-amino-3-oxobutanoate to glycine and acetyl-CoA. The polypeptide is 2-amino-3-ketobutyrate coenzyme A ligase, mitochondrial (Homo sapiens (Human)).